Here is a 217-residue protein sequence, read N- to C-terminus: MALVLKISGRVFDNEELVLKYAEILNKLPGRIAVVAGGGEVARRYIAVARKGGASNTFQDLLGIYASRLNALLLISLLKDAYAKVPRNMEEFLEAWGRSRIVVTGGFQPGQSTATVAALVAEAVRAAALLNAANIDAVYSDDPRKNPNATRLSELKYDEFERILRSSNLPGGYELIDTWAVSILKRSCITTYIFDGRTPEAIEAVVRGENPGSKITC.

6–10 (KISGR) is an ATP binding site. UMP is bound at residue Gly-38. ATP is bound by residues Gly-39 and Arg-43. Residues Asp-60 and 107–113 (FQPGQST) contribute to the UMP site. ATP contacts are provided by Asn-134, Tyr-139, and Asp-142.

Belongs to the UMP kinase family. Homohexamer.

It localises to the cytoplasm. The enzyme catalyses UMP + ATP = UDP + ADP. Its pathway is pyrimidine metabolism; CTP biosynthesis via de novo pathway; UDP from UMP (UMPK route): step 1/1. Its activity is regulated as follows. Inhibited by UTP. Catalyzes the reversible phosphorylation of UMP to UDP. The protein is Uridylate kinase of Pyrobaculum arsenaticum (strain DSM 13514 / JCM 11321 / PZ6).